The chain runs to 145 residues: Large ribosomal subunit protein uL13 (145 aa).

Belongs to the universal ribosomal protein uL13 family. As to quaternary structure, part of the 50S ribosomal subunit.

Its function is as follows. This protein is one of the early assembly proteins of the 50S ribosomal subunit, although it is not seen to bind rRNA by itself. It is important during the early stages of 50S assembly. The chain is Large ribosomal subunit protein uL13 from Listeria monocytogenes serotype 4b (strain CLIP80459).